Reading from the N-terminus, the 208-residue chain is Small ribosomal subunit protein uS4 (208 aa).

Positions 98–161 constitute an S4 RNA-binding domain; it reads RRLDNVVYRL…RKIPVLAEAQ (64 aa).

This sequence belongs to the universal ribosomal protein uS4 family. Part of the 30S ribosomal subunit. Contacts protein S5. The interaction surface between S4 and S5 is involved in control of translational fidelity.

One of the primary rRNA binding proteins, it binds directly to 16S rRNA where it nucleates assembly of the body of the 30S subunit. Functionally, with S5 and S12 plays an important role in translational accuracy. The sequence is that of Small ribosomal subunit protein uS4 from Desulfovibrio desulfuricans (strain ATCC 27774 / DSM 6949 / MB).